We begin with the raw amino-acid sequence, 272 residues long: Diaminopimelate epimerase (272 aa).

The substrate site is built by asparagine 11 and asparagine 63. Cysteine 72 serves as the catalytic Proton donor. Residues 73 to 74 (GN), asparagine 190, and 208 to 209 (ER) each bind substrate. The active-site Proton acceptor is the cysteine 217. Substrate is bound at residue 218-219 (GT).

This sequence belongs to the diaminopimelate epimerase family. In terms of assembly, homodimer.

It is found in the cytoplasm. The enzyme catalyses (2S,6S)-2,6-diaminopimelate = meso-2,6-diaminopimelate. Its pathway is amino-acid biosynthesis; L-lysine biosynthesis via DAP pathway; DL-2,6-diaminopimelate from LL-2,6-diaminopimelate: step 1/1. In terms of biological role, catalyzes the stereoinversion of LL-2,6-diaminopimelate (L,L-DAP) to meso-diaminopimelate (meso-DAP), a precursor of L-lysine and an essential component of the bacterial peptidoglycan. This is Diaminopimelate epimerase from Clostridium perfringens (strain 13 / Type A).